Here is a 969-residue protein sequence, read N- to C-terminus: Protein translocase subunit SecA (969 aa).

Residues Q99, 117-121 (GEGKT), and D631 contribute to the ATP site.

It belongs to the SecA family. As to quaternary structure, monomer and homodimer. Part of the essential Sec protein translocation apparatus which comprises SecA, SecYEG and auxiliary proteins SecDF. Other proteins may also be involved.

Its subcellular location is the cell inner membrane. The protein resides in the cytoplasm. The enzyme catalyses ATP + H2O + cellular proteinSide 1 = ADP + phosphate + cellular proteinSide 2.. In terms of biological role, part of the Sec protein translocase complex. Interacts with the SecYEG preprotein conducting channel. Has a central role in coupling the hydrolysis of ATP to the transfer of proteins into and across the cell membrane, serving as an ATP-driven molecular motor driving the stepwise translocation of polypeptide chains across the membrane. The chain is Protein translocase subunit SecA from Chlamydia abortus (strain DSM 27085 / S26/3) (Chlamydophila abortus).